A 181-amino-acid polypeptide reads, in one-letter code: ECF RNA polymerase sigma factor RpoE (181 aa).

Positions leucine 29–arginine 96 are sigma-70 factor domain-2. The Interaction with polymerase core subunit RpoC signature appears at glutamate 53–glutamine 56. The tract at residues alanine 129–glutamine 178 is sigma-70 factor domain-4. Residues histidine 151–arginine 170 constitute a DNA-binding region (H-T-H motif).

This sequence belongs to the sigma-70 factor family. ECF subfamily. In terms of assembly, interacts transiently with the RNA polymerase catalytic core formed by RpoA, RpoB, RpoC and RpoZ (2 alpha, 1 beta, 1 beta' and 1 omega subunit) to form the RNA polymerase holoenzyme that can initiate transcription. Forms a 1:1 complex (via sigma-70 factor domain 4) with anti-sigma factor ChrR; this inhibits the interaction of RpoE with the RNA polymerase catalytic core.

Its function is as follows. Sigma factors are initiation factors that promote the attachment of RNA polymerase to specific initiation sites and are then released. Extracytoplasmic function (ECF) sigma factors are held in an inactive form by a cognate anti-sigma factor until released. Sigma-E controls a transcriptional response to singlet oxygen, a by-product of photosynthesis; its continuous activity requires constant exposure to singlet oxygen. The regulon has about 180 genes that protect against or repair damage induced by singlet oxygen, including itself and rpoH2, a heat shock-responsive sigma factor. This is ECF RNA polymerase sigma factor RpoE (rpoE) from Cereibacter sphaeroides (strain ATCC 17023 / DSM 158 / JCM 6121 / CCUG 31486 / LMG 2827 / NBRC 12203 / NCIMB 8253 / ATH 2.4.1.) (Rhodobacter sphaeroides).